The chain runs to 106 residues: Nucleoid-associated protein Smlt1015 (106 aa).

Positions 81–106 (IDAESKSKMGSATAGMQLPPGMKLPF) are disordered.

Belongs to the YbaB/EbfC family. In terms of assembly, homodimer.

It localises to the cytoplasm. The protein localises to the nucleoid. Its function is as follows. Binds to DNA and alters its conformation. May be involved in regulation of gene expression, nucleoid organization and DNA protection. This is Nucleoid-associated protein Smlt1015 from Stenotrophomonas maltophilia (strain K279a).